Consider the following 1171-residue polypeptide: ATP-dependent helicase/deoxyribonuclease subunit B (1171 aa).

Positions 1 to 390 constitute a UvrD-like helicase ATP-binding domain; it reads MSLRFVIGRA…HPLVECIRSA (390 aa). 8-15 contributes to the ATP binding site; sequence GRAGSGKS. The region spanning 281-587 is the UvrD-like helicase C-terminal domain; the sequence is MEQPRFHSPA…QFANIPPSLD (307 aa). 4 residues coordinate [4Fe-4S] cluster: cysteine 805, cysteine 1129, cysteine 1132, and cysteine 1138.

It belongs to the helicase family. AddB/RexB type 1 subfamily. Heterodimer of AddA and AddB. Requires Mg(2+) as cofactor. The cofactor is [4Fe-4S] cluster.

Functionally, the heterodimer acts as both an ATP-dependent DNA helicase and an ATP-dependent, dual-direction single-stranded exonuclease. Recognizes the chi site generating a DNA molecule suitable for the initiation of homologous recombination. The AddB subunit has 5' -&gt; 3' nuclease activity but not helicase activity. The sequence is that of ATP-dependent helicase/deoxyribonuclease subunit B from Bacillus cereus (strain B4264).